The chain runs to 622 residues: Chaperone protein HscA homolog (622 aa).

It belongs to the heat shock protein 70 family.

Chaperone involved in the maturation of iron-sulfur cluster-containing proteins. Has a low intrinsic ATPase activity which is markedly stimulated by HscB. The chain is Chaperone protein HscA homolog from Delftia acidovorans (strain DSM 14801 / SPH-1).